A 3063-amino-acid polypeptide reads, in one-letter code: Collagen alpha-1(XII) chain (3063 aa).

The signal sequence occupies residues methionine 1–alanine 23. The Fibronectin type-III 1 domain occupies proline 27–serine 117. One can recognise a VWFA 1 domain in the interval aspartate 140–valine 316. O-linked (Xyl...) (chondroitin sulfate) serine glycosylation occurs at serine 329. Residues proline 336–lysine 426 enclose the Fibronectin type-III 2 domain. Residues aspartate 440 to isoleucine 616 enclose the VWFA 2 domain. 6 consecutive Fibronectin type-III domains span residues proline 634–valine 722, alanine 725–asparagine 816, proline 817–arginine 905, serine 907–aspartate 998, serine 999–phenylalanine 1087, and serine 1089–aspartate 1179. N-linked (GlcNAc...) asparagine glycosylation is present at asparagine 700. O-linked (Xyl...) (chondroitin sulfate) serine glycosylation occurs at serine 798. Residues glycine 799–methionine 830 form a disordered region. Residues glutamate 811–valine 822 show a composition bias toward basic and acidic residues. Positions arginine 862 to aspartate 864 match the Cell attachment site motif. O-linked (Xyl...) (chondroitin sulfate) serine glycans are attached at residues serine 889 and serine 981. The interval arginine 1077 to threonine 1099 is disordered. A compositionally biased stretch (polar residues) spans glycine 1079–threonine 1099. A VWFA 3 domain is found at aspartate 1199–leucine 1371. 10 consecutive Fibronectin type-III domains span residues alanine 1387–proline 1476, valine 1477–proline 1567, arginine 1568–proline 1658, threonine 1659–serine 1754, glycine 1755–asparagine 1849, leucine 1850–glycine 1935, leucine 1936–serine 2026, glycine 2027–leucine 2117, proline 2118–asparagine 2206, and valine 2207–proline 2294. Asparagine 1763 carries an N-linked (GlcNAc...) asparagine glycan. An N-linked (GlcNAc...) asparagine glycan is attached at asparagine 2206. Residues glycine 2283 to proline 2312 form a disordered region. Residues threonine 2299–proline 2311 show a composition bias toward pro residues. The VWFA 4 domain maps to aspartate 2323–leucine 2496. A nonhelical region (NC3) region spans residues serine 2451–valine 2746. Positions glycine 2520–proline 2712 constitute a Laminin G-like domain. 2 N-linked (GlcNAc...) asparagine glycosylation sites follow: asparagine 2528 and asparagine 2679. Disordered regions lie at residues glutamine 2743–glycine 2896 and asparagine 2932–glycine 3063. Collagen-like domains are found at residues glycine 2747–glycine 2798, proline 2802–proline 2852, arginine 2853–isoleucine 2898, and proline 2941–glycine 2990. The segment at glycine 2747–isoleucine 2898 is triple-helical region (COL2) with 1 imperfection. The Cell attachment site motif lies at arginine 2779–aspartate 2781. The segment covering proline 2784–glutamine 2794 has biased composition (pro residues). Over residues proline 2817–proline 2826 the composition is skewed to low complexity. Pro residues-rich tracts occupy residues leucine 2828–proline 2837 and arginine 2853–proline 2862. Positions serine 2864–proline 2874 are enriched in low complexity. A Cell attachment site motif is present at residues arginine 2895–aspartate 2897. Residues alanine 2899–proline 2941 are nonhelical region (NC2). A compositionally biased stretch (pro residues) spans proline 2941–proline 2950. Positions glycine 2942 to cysteine 3044 are triple-helical region (COL1) with 2 imperfections. Proline 2944, proline 2947, proline 2950, proline 2959, proline 2965, proline 2968, proline 2971, proline 2983, proline 3000, proline 3003, proline 3014, proline 3023, proline 3026, and proline 3029 each carry 4-hydroxyproline. The segment covering glycine 2957–glycine 2966 has biased composition (gly residues). Low complexity predominate over residues glutamine 3006 to arginine 3020. Residues aspartate 3045–glycine 3063 form a nonhelical region (NC1) region.

This sequence belongs to the fibril-associated collagens with interrupted helices (FACIT) family. Trimer of identical chains each containing 190 kDa of non-triple-helical sequences. Post-translationally, the triple-helical tail is stabilized by disulfide bonds at each end. Hydroxylation on proline residues within the sequence motif, GXPG, is most likely to be 4-hydroxy as this fits the requirement for 4-hydroxylation in vertebrates. In terms of processing, isoform 1 O-glycosylation; glycosaminoglycan of chondroitin-sulfate type. In terms of tissue distribution, found in collagen I-containing tissues: both isoform 1 and isoform 2 appear in amnion, chorion, skeletal muscle, small intestine, and in cell culture of dermal fibroblasts, keratinocytes and endothelial cells. Only isoform 2 is found in lung, placenta, kidney and a squamous cell carcinoma cell line. Isoform 1 is also present in the corneal epithelial Bowman's membrane (BM) and the interfibrillar matrix of the corneal stroma, but it is not detected in the limbal BM.

The protein localises to the secreted. It localises to the extracellular space. Its subcellular location is the extracellular matrix. Type XII collagen interacts with type I collagen-containing fibrils, the COL1 domain could be associated with the surface of the fibrils, and the COL2 and NC3 domains may be localized in the perifibrillar matrix. The sequence is that of Collagen alpha-1(XII) chain (COL12A1) from Homo sapiens (Human).